We begin with the raw amino-acid sequence, 194 residues long: dCTP deaminase, dUMP-forming (194 aa).

DCTP is bound by residues 105–110 (RSSMGR), D123, 131–133 (TLE), Q152, Y166, K174, and Q178. Catalysis depends on E133, which acts as the Proton donor/acceptor.

This sequence belongs to the dCTP deaminase family. Homotrimer.

It catalyses the reaction dCTP + 2 H2O = dUMP + NH4(+) + diphosphate. It participates in pyrimidine metabolism; dUMP biosynthesis; dUMP from dCTP: step 1/1. Functionally, bifunctional enzyme that catalyzes both the deamination of dCTP to dUTP and the hydrolysis of dUTP to dUMP without releasing the toxic dUTP intermediate. This is dCTP deaminase, dUMP-forming from Methanobrevibacter smithii (strain ATCC 35061 / DSM 861 / OCM 144 / PS).